A 59-amino-acid chain; its full sequence is Antibacterial peptide enbocin (59 aa).

Positions 1–20 are cleaved as a signal peptide; the sequence is MNFTRIIFFLFVVVFATASG. Residue lysine 21 is a propeptide. A Serine amide modification is found at serine 58.

This sequence belongs to the cecropin family.

The protein localises to the secreted. Its function is as follows. Has antibacterial activity against Gram-positive and Gram-negative bacteria. This Bombyx mori (Silk moth) protein is Antibacterial peptide enbocin.